Reading from the N-terminus, the 187-residue chain is Crossover junction endodeoxyribonuclease RuvC (187 aa).

Catalysis depends on residues aspartate 7, glutamate 67, and aspartate 140. 3 residues coordinate Mg(2+): aspartate 7, glutamate 67, and aspartate 140.

Belongs to the RuvC family. As to quaternary structure, homodimer which binds Holliday junction (HJ) DNA. The HJ becomes 2-fold symmetrical on binding to RuvC with unstacked arms; it has a different conformation from HJ DNA in complex with RuvA. In the full resolvosome a probable DNA-RuvA(4)-RuvB(12)-RuvC(2) complex forms which resolves the HJ. Mg(2+) serves as cofactor.

It localises to the cytoplasm. The enzyme catalyses Endonucleolytic cleavage at a junction such as a reciprocal single-stranded crossover between two homologous DNA duplexes (Holliday junction).. Functionally, the RuvA-RuvB-RuvC complex processes Holliday junction (HJ) DNA during genetic recombination and DNA repair. Endonuclease that resolves HJ intermediates. Cleaves cruciform DNA by making single-stranded nicks across the HJ at symmetrical positions within the homologous arms, yielding a 5'-phosphate and a 3'-hydroxyl group; requires a central core of homology in the junction. The consensus cleavage sequence is 5'-(A/T)TT(C/G)-3'. Cleavage occurs on the 3'-side of the TT dinucleotide at the point of strand exchange. HJ branch migration catalyzed by RuvA-RuvB allows RuvC to scan DNA until it finds its consensus sequence, where it cleaves and resolves the cruciform DNA. This Chlorobaculum parvum (strain DSM 263 / NCIMB 8327) (Chlorobium vibrioforme subsp. thiosulfatophilum) protein is Crossover junction endodeoxyribonuclease RuvC.